Consider the following 216-residue polypeptide: Ribosomal RNA small subunit methyltransferase G (216 aa).

S-adenosyl-L-methionine is bound by residues Gly73, Leu78, 124–125 (AE), and Arg139.

The protein belongs to the methyltransferase superfamily. RNA methyltransferase RsmG family.

It localises to the cytoplasm. Its function is as follows. Specifically methylates the N7 position of guanine in position 518 of 16S rRNA. In Arthrobacter sp. (strain FB24), this protein is Ribosomal RNA small subunit methyltransferase G.